Here is a 78-residue protein sequence, read N- to C-terminus: Apolipoprotein C-I (78 aa).

A signal peptide spans 1–26 (MRLILCLPVLVVVLLMVLEGPAPAQG).

Belongs to the apolipoprotein C1 family.

It localises to the secreted. Inhibitor of lipoprotein binding to the low density lipoprotein (LDL) receptor, LDL receptor-related protein, and very low density lipoprotein (VLDL) receptor. Associates with high density lipoproteins (HDL) and the triacylglycerol-rich lipoproteins in the plasma and makes up about 10% of the protein of the VLDL and 2% of that of HDL. Appears to interfere directly with fatty acid uptake and is also the major plasma inhibitor of cholesteryl ester transfer protein (CETP). Binds free fatty acids and reduces their intracellular esterification. Modulates the interaction of APOE with beta-migrating VLDL and inhibits binding of beta-VLDL to the LDL receptor-related protein. This is Apolipoprotein C-I (APOC1) from Acinonyx jubatus (Cheetah).